Consider the following 176-residue polypeptide: MAWMLLLILIMVYPGSCALWVSQPPEIRTLEGSSAFLPCSFNASQGRLAIGSVTWFRDEVAPGKEVRNGTPEFRGRLAPLSSSRFLRDHQAELHIWDVRGHDAGIYVCRVEVLGLGVGTGNGTRLVVEKEYPQLGAGTVLLLRAGFYAVSFLSVAVGSTLYYQGKCHCHMGTHCHS.

An N-terminal signal peptide occupies residues 1–18 (MAWMLLLILIMVYPGSCA). Positions 19 to 126 (LWVSQPPEIR…VGTGNGTRLV (108 aa)) constitute an Ig-like domain. Over 19–135 (LWVSQPPEIR…VVEKEYPQLG (117 aa)) the chain is Extracellular. Cysteines 39 and 108 form a disulfide. 2 N-linked (GlcNAc...) asparagine glycosylation sites follow: asparagine 42 and asparagine 121. A helical membrane pass occupies residues 136–156 (AGTVLLLRAGFYAVSFLSVAV). The Cytoplasmic segment spans residues 157-176 (GSTLYYQGKCHCHMGTHCHS).

This sequence belongs to the natural cytotoxicity receptor (NCR) family. As to quaternary structure, homodimer in the unliganted form. Interacts with CD3Z. Interacts with and is activated by binding to NCR3LG1. Interacts with and is activated by binding to BAG6. Interacts with and is inhibited by binding to LGALS3.

Its subcellular location is the cell membrane. Its function is as follows. Cell membrane receptor of natural killer/NK cells that is activated by binding of extracellular ligands including BAG6 and NCR3LG1. Stimulates NK cells cytotoxicity toward neighboring cells producing these ligands. It controls, for instance, NK cells cytotoxicity against tumor cells. Engagement of NCR3 by BAG6 also promotes myeloid dendritic cells (DC) maturation, both through killing DCs that did not acquire a mature phenotype, and inducing the release by NK cells of TNFA and IFNG that promote DC maturation. In Macaca fascicularis (Crab-eating macaque), this protein is Natural cytotoxicity triggering receptor 3 (NCR3).